Here is a 417-residue protein sequence, read N- to C-terminus: Cobalamin binding intrinsic factor (417 aa).

A signal peptide spans 1–18; sequence MAWLTLYLLSVLWAVAGT. Cystine bridges form between Cys26-Cys246, Cys103-Cys288, and Cys143-Cys182. Cob(II)alamin is bound at residue Asp171. Ser191 carries the phosphoserine modification. 2 residues coordinate cob(II)alamin: Asp222 and Gln270. N-linked (GlcNAc...) asparagine glycans are attached at residues Asn311 and Asn330. Cob(II)alamin-binding positions include 365-370 and 386-395; these read SWGLIV and WEFLSGKTPL. Asn413 carries an N-linked (GlcNAc...) asparagine glycan.

This sequence belongs to the eukaryotic cobalamin transport proteins family. Interacts with CUBN (via CUB domains). In terms of tissue distribution, gastric mucosa.

The protein localises to the secreted. Functionally, promotes absorption of the essential vitamin cobalamin (Cbl) in the ileum. After interaction with CUBN, the CBLIF-cobalamin complex is internalized via receptor-mediated endocytosis. This is Cobalamin binding intrinsic factor (Cblif) from Mus musculus (Mouse).